Reading from the N-terminus, the 93-residue chain is Pyrimidine/purine nucleoside phosphorylase (93 aa).

The protein belongs to the nucleoside phosphorylase PpnP family.

It carries out the reaction a purine D-ribonucleoside + phosphate = a purine nucleobase + alpha-D-ribose 1-phosphate. It catalyses the reaction adenosine + phosphate = alpha-D-ribose 1-phosphate + adenine. The enzyme catalyses cytidine + phosphate = cytosine + alpha-D-ribose 1-phosphate. The catalysed reaction is guanosine + phosphate = alpha-D-ribose 1-phosphate + guanine. It carries out the reaction inosine + phosphate = alpha-D-ribose 1-phosphate + hypoxanthine. It catalyses the reaction thymidine + phosphate = 2-deoxy-alpha-D-ribose 1-phosphate + thymine. The enzyme catalyses uridine + phosphate = alpha-D-ribose 1-phosphate + uracil. The catalysed reaction is xanthosine + phosphate = alpha-D-ribose 1-phosphate + xanthine. Its function is as follows. Catalyzes the phosphorolysis of diverse nucleosides, yielding D-ribose 1-phosphate and the respective free bases. Can use uridine, adenosine, guanosine, cytidine, thymidine, inosine and xanthosine as substrates. Also catalyzes the reverse reactions. The chain is Pyrimidine/purine nucleoside phosphorylase from Shewanella halifaxensis (strain HAW-EB4).